Here is a 247-residue protein sequence, read N- to C-terminus: tRNA pseudouridine synthase A (247 aa).

Asp-52 serves as the catalytic Nucleophile. Substrate is bound at residue Tyr-111.

Belongs to the tRNA pseudouridine synthase TruA family. In terms of assembly, homodimer.

The enzyme catalyses uridine(38/39/40) in tRNA = pseudouridine(38/39/40) in tRNA. Functionally, formation of pseudouridine at positions 38, 39 and 40 in the anticodon stem and loop of transfer RNAs. This Caulobacter vibrioides (strain ATCC 19089 / CIP 103742 / CB 15) (Caulobacter crescentus) protein is tRNA pseudouridine synthase A.